Consider the following 407-residue polypeptide: POC1 centriolar protein homolog A (407 aa).

WD repeat units follow at residues 17–56 (GHRD…RAYR), 59–98 (GHKD…ESTV), 101–140 (AHTA…FLFS), 143–182 (QHIN…CVHS), 185–224 (EHGG…LLQH), 227–266 (LHSA…LLYT), and 269–308 (GHQG…VDYG). The disordered stretch occupies residues 317–357 (PATRASSSGTLPEVDPLVPPGRGRSQESMQSHSQEPVSVPQ). Residues 342 to 357 (QESMQSHSQEPVSVPQ) are compositionally biased toward polar residues. Residues 369-397 (QLDVLTQTVSILEQRLTLTEDKLKQCLEN) adopt a coiled-coil conformation.

This sequence belongs to the WD repeat POC1 family. In terms of assembly, interacts with POC1B.

It is found in the cytoplasm. The protein resides in the cytoskeleton. Its subcellular location is the microtubule organizing center. The protein localises to the centrosome. It localises to the centriole. It is found in the cilium basal body. The protein resides in the spindle pole. In terms of biological role, plays an important role in centriole assembly and/or stability and ciliogenesis. Involved in early steps of centriole duplication, as well as in the later steps of centriole length control. Acts in concert with POC1B to ensure centriole integrity and proper mitotic spindle formation. This chain is POC1 centriolar protein homolog A (POC1A), found in Bos taurus (Bovine).